Consider the following 117-residue polypeptide: UPF0295 protein YgzB (117 aa).

A run of 2 helical transmembrane segments spans residues Thr13 to Lys33 and Leu41 to Gly61.

The protein belongs to the UPF0295 family.

The protein localises to the cell membrane. This chain is UPF0295 protein YgzB (ygzB), found in Bacillus subtilis (strain 168).